The primary structure comprises 231 residues: Large ribosomal subunit protein uL1 (231 aa).

Belongs to the universal ribosomal protein uL1 family. In terms of assembly, part of the 50S ribosomal subunit.

Binds directly to 23S rRNA. The L1 stalk is quite mobile in the ribosome, and is involved in E site tRNA release. Functionally, protein L1 is also a translational repressor protein, it controls the translation of the L11 operon by binding to its mRNA. The polypeptide is Large ribosomal subunit protein uL1 (Ralstonia pickettii (strain 12J)).